The chain runs to 500 residues: Glycerol kinase (500 aa).

Threonine 16 is an ADP binding site. Residues threonine 16 and threonine 17 each contribute to the ATP site. Threonine 16 is a sn-glycerol 3-phosphate binding site. Position 20 (arginine 20) interacts with ADP. Positions 86, 87, 138, and 247 each coordinate sn-glycerol 3-phosphate. Residues arginine 86, glutamate 87, tyrosine 138, aspartate 247, and glutamine 248 each coordinate glycerol. ADP-binding residues include threonine 269 and glycine 312. Residues threonine 269, glycine 312, glutamine 316, and glycine 413 each coordinate ATP. Glycine 413 and asparagine 417 together coordinate ADP.

Belongs to the FGGY kinase family.

It catalyses the reaction glycerol + ATP = sn-glycerol 3-phosphate + ADP + H(+). It functions in the pathway polyol metabolism; glycerol degradation via glycerol kinase pathway; sn-glycerol 3-phosphate from glycerol: step 1/1. Inhibited by fructose 1,6-bisphosphate (FBP). Its function is as follows. Key enzyme in the regulation of glycerol uptake and metabolism. Catalyzes the phosphorylation of glycerol to yield sn-glycerol 3-phosphate. The polypeptide is Glycerol kinase (Rippkaea orientalis (strain PCC 8801 / RF-1) (Cyanothece sp. (strain PCC 8801))).